We begin with the raw amino-acid sequence, 493 residues long: Cysteine--tRNA ligase (493 aa).

Cysteine 31 is a Zn(2+) binding site. Positions 33–43 (PTVYGDAHLGH) match the 'HIGH' region motif. 3 residues coordinate Zn(2+): cysteine 226, histidine 251, and glutamate 255. The 'KMSKS' region motif lies at 283–287 (KMGKS). Residue lysine 286 coordinates ATP.

The protein belongs to the class-I aminoacyl-tRNA synthetase family. As to quaternary structure, monomer. Zn(2+) serves as cofactor.

It is found in the cytoplasm. The catalysed reaction is tRNA(Cys) + L-cysteine + ATP = L-cysteinyl-tRNA(Cys) + AMP + diphosphate. In Bacteroides thetaiotaomicron (strain ATCC 29148 / DSM 2079 / JCM 5827 / CCUG 10774 / NCTC 10582 / VPI-5482 / E50), this protein is Cysteine--tRNA ligase.